The following is a 438-amino-acid chain: Phosphatidylcholine-sterol acyltransferase (438 aa).

The N-terminal stretch at 1–24 (MGLPGSPWQRVLLLLGLLLPPATP) is a signal peptide. The N-linked (GlcNAc...) asparagine glycan is linked to Asn-44. Cys-74 and Cys-98 are disulfide-bonded. The N-linked (GlcNAc...) asparagine glycan is linked to Asn-108. The active-site Nucleophile is the Ser-205. N-linked (GlcNAc...) asparagine glycosylation is present at Asn-296. An intrachain disulfide couples Cys-337 to Cys-380. Asp-369 serves as the catalytic Charge relay system. The N-linked (GlcNAc...) asparagine glycan is linked to Asn-397. His-401 functions as the Charge relay system in the catalytic mechanism. N-linked (GlcNAc...) asparagine glycosylation occurs at Asn-408.

This sequence belongs to the AB hydrolase superfamily. Lipase family. As to expression, detected in blood plasma. Produced and secreted by astrocytes (at protein level). Abundantly expressed in liver, brain and testis with highest levels in liver. In the brain, found in cerebellum, cerebral cortex, hippocampus and brain stem. Located to neurons and neuroglia.

The protein resides in the secreted. The catalysed reaction is a sterol + a 1,2-diacyl-sn-glycero-3-phosphocholine = a sterol ester + a 1-acyl-sn-glycero-3-phosphocholine. The enzyme catalyses a 1-O-alkyl-2-acetyl-sn-glycero-3-phosphocholine + H2O = a 1-O-alkyl-sn-glycero-3-phosphocholine + acetate + H(+). It carries out the reaction a 1-hexadecanoyl-2-acyl-sn-glycero-3-phosphocholine + (24S)-hydroxycholesterol = (24S)-24-hydroxycholesterol ester + 1-hexadecanoyl-sn-glycero-3-phosphocholine. It catalyses the reaction (24S)-hydroxycholesterol + 1-hexadecanoyl-2-(9Z,12Z-octadecadienoyl)-sn-glycero-3-phosphocholine = (24S)-hydroxycholesterol 3-linoleoate + 1-hexadecanoyl-sn-glycero-3-phosphocholine. The catalysed reaction is 1-hexadecanoyl-2-(5Z,8Z,11Z,14Z-eicosatetraenoyl)-sn-glycero-3-phosphocholine + cholesterol = cholesteryl (5Z,8Z,11Z,14Z)-eicosatetraenoate + 1-hexadecanoyl-sn-glycero-3-phosphocholine. The enzyme catalyses 1-hexadecanoyl-2-(9Z-octadecenoyl)-sn-glycero-3-phosphocholine + cholesterol = cholesteryl (9Z-octadecenoate) + 1-hexadecanoyl-sn-glycero-3-phosphocholine. It carries out the reaction 1-hexadecanoyl-2-(8Z,11Z,14Z-eicosatrienoyl)-sn-glycero-3-phosphocholine + cholesterol = cholesteryl (8Z,11Z,14Z)-eicosatrienoate + 1-hexadecanoyl-sn-glycero-3-phosphocholine. It catalyses the reaction 1-hexadecanoyl-2-(5Z,8Z,11Z-eicosatrienoyl)-sn-glycero-3-phosphocholine + cholesterol = cholesteryl (5Z,8Z,11Z)-eicosatrienoate + 1-hexadecanoyl-sn-glycero-3-phosphocholine. The catalysed reaction is 1-hexadecanoyl-2-(5Z,8Z,11Z,14Z,17Z-eicosapentaenoyl)-sn-glycero-3-phosphocholine + cholesterol = (5Z,8Z,11Z,14Z,17Z-eicosapentaenoyl)-cholesterol + 1-hexadecanoyl-sn-glycero-3-phosphocholine. The enzyme catalyses 1-hexadecanoyl-2-(9Z,12Z-octadecadienoyl)-sn-glycero-3-phosphocholine + cholesterol = cholesteryl (9Z,12Z)-octadecadienoate + 1-hexadecanoyl-sn-glycero-3-phosphocholine. It carries out the reaction 1-hexadecanoyl-2-(6Z,9Z,12Z-octadecatrienoyl)-sn-glycero-3-phosphocholine + cholesterol = (6Z,9Z,12Z-octadecatrienoyl)-cholesterol + 1-hexadecanoyl-sn-glycero-3-phosphocholine. It catalyses the reaction 1-hexadecanoyl-2-(11Z,14Z,17Z-eicosatrienoyl)-sn-glycero-3-phosphocholine + cholesterol = (11Z,14Z,17Z-eicosatrienoyl)-cholesterol + 1-hexadecanoyl-sn-glycero-3-phosphocholine. The catalysed reaction is 1-hexadecanoyl-2-(9Z,12Z,15Z-octadecatrienoyl)-sn-glycero-3-phosphocholine + cholesterol = (9Z,12Z,15Z-octadecatrienoyl)-cholesterol + 1-hexadecanoyl-sn-glycero-3-phosphocholine. The enzyme catalyses 1-hexadecanoyl-2-(9Z,12Z-octadecadienoyl)-sn-glycero-3-phosphocholine + H2O = (9Z,12Z)-octadecadienoate + 1-hexadecanoyl-sn-glycero-3-phosphocholine + H(+). It carries out the reaction 1-hexadecanoyl-2-(5Z,8Z,11Z,14Z-eicosatetraenoyl)-sn-glycero-3-phosphocholine + H2O = 1-hexadecanoyl-sn-glycero-3-phosphocholine + (5Z,8Z,11Z,14Z)-eicosatetraenoate + H(+). It catalyses the reaction a 1-O-alkyl-2-acetyl-sn-glycero-3-phosphocholine + 1-hexadecanoyl-sn-glycero-3-phosphocholine = 1-hexadecanoyl-2-acetyl-sn-glycero-3-phosphocholine + a 1-O-alkyl-sn-glycero-3-phosphocholine. Its activity is regulated as follows. APOA1 is the most potent activator in plasma. Also activated by APOE, APOC1 and APOA4. Its function is as follows. Central enzyme in the extracellular metabolism of plasma lipoproteins. Synthesized mainly in the liver and secreted into plasma where it converts cholesterol and phosphatidylcholines (lecithins) to cholesteryl esters and lysophosphatidylcholines on the surface of high and low density lipoproteins (HDLs and LDLs). The cholesterol ester is then transported back to the liver. Also produced in the brain by primary astrocytes, and esterifies free cholesterol on nascent APOE-containing lipoproteins secreted from glia and influences cerebral spinal fluid (CSF) APOE- and APOA1 levels. Together with APOE and the cholesterol transporter ABCA1, plays a key role in the maturation of glial-derived, nascent lipoproteins. Required for remodeling high-density lipoprotein particles into their spherical forms. Has a preference for plasma 16:0-18:2 or 18:O-18:2 phosphatidylcholines. Catalyzes the hydrolysis of 1-O-alkyl-2-acetyl-sn-glycero-3-phosphocholine (platelet-activating factor or PAF) to 1-O-alkyl-sn-glycero-3-phosphocholine (lyso-PAF). Also catalyzes the transfer of the acetate group from PAF to 1-hexadecanoyl-sn-glycero-3-phosphocholine forming lyso-PAF. Catalyzes the esterification of (24S)-hydroxycholesterol (24(S)OH-C), also known as cerebrosterol to produce 24(S)OH-C monoesters. The polypeptide is Phosphatidylcholine-sterol acyltransferase (Lcat) (Mus musculus (Mouse)).